Reading from the N-terminus, the 183-residue chain is ATP synthase subunit delta (183 aa).

Belongs to the ATPase delta chain family. As to quaternary structure, F-type ATPases have 2 components, F(1) - the catalytic core - and F(0) - the membrane proton channel. F(1) has five subunits: alpha(3), beta(3), gamma(1), delta(1), epsilon(1). F(0) has three main subunits: a(1), b(2) and c(10-14). The alpha and beta chains form an alternating ring which encloses part of the gamma chain. F(1) is attached to F(0) by a central stalk formed by the gamma and epsilon chains, while a peripheral stalk is formed by the delta and b chains.

It localises to the cell membrane. In terms of biological role, f(1)F(0) ATP synthase produces ATP from ADP in the presence of a proton or sodium gradient. F-type ATPases consist of two structural domains, F(1) containing the extramembraneous catalytic core and F(0) containing the membrane proton channel, linked together by a central stalk and a peripheral stalk. During catalysis, ATP synthesis in the catalytic domain of F(1) is coupled via a rotary mechanism of the central stalk subunits to proton translocation. Functionally, this protein is part of the stalk that links CF(0) to CF(1). It either transmits conformational changes from CF(0) to CF(1) or is implicated in proton conduction. The polypeptide is ATP synthase subunit delta (Mesoplasma florum (strain ATCC 33453 / NBRC 100688 / NCTC 11704 / L1) (Acholeplasma florum)).